The sequence spans 517 residues: GMP synthase [glutamine-hydrolyzing] (517 aa).

In terms of domain architecture, Glutamine amidotransferase type-1 spans 4–193; that stretch reads KIIILDFGSQ…VVDICGGKQD (190 aa). Cys-79 serves as the catalytic Nucleophile. Residues His-167 and Glu-169 contribute to the active site. The region spanning 194–382 is the GMPS ATP-PPase domain; the sequence is WSAASFIETT…LGMPEHLITR (189 aa). 221–227 is a binding site for ATP; it reads SGGVDSS.

Homodimer.

The enzyme catalyses XMP + L-glutamine + ATP + H2O = GMP + L-glutamate + AMP + diphosphate + 2 H(+). Its pathway is purine metabolism; GMP biosynthesis; GMP from XMP (L-Gln route): step 1/1. Its function is as follows. Catalyzes the synthesis of GMP from XMP. This chain is GMP synthase [glutamine-hydrolyzing], found in Phocaeicola vulgatus (strain ATCC 8482 / DSM 1447 / JCM 5826 / CCUG 4940 / NBRC 14291 / NCTC 11154) (Bacteroides vulgatus).